We begin with the raw amino-acid sequence, 311 residues long: Ribosomal protein L11 methyltransferase (311 aa).

The S-adenosyl-L-methionine site is built by T163, G184, D206, and N248.

Belongs to the methyltransferase superfamily. PrmA family.

The protein localises to the cytoplasm. The enzyme catalyses L-lysyl-[protein] + 3 S-adenosyl-L-methionine = N(6),N(6),N(6)-trimethyl-L-lysyl-[protein] + 3 S-adenosyl-L-homocysteine + 3 H(+). In terms of biological role, methylates ribosomal protein L11. The chain is Ribosomal protein L11 methyltransferase from Clostridium acetobutylicum (strain ATCC 824 / DSM 792 / JCM 1419 / IAM 19013 / LMG 5710 / NBRC 13948 / NRRL B-527 / VKM B-1787 / 2291 / W).